The following is a 140-amino-acid chain: Midkine (140 aa).

An N-terminal signal peptide occupies residues 1-20 (MQHRSFFLLALVALLAVTTA). 5 disulfide bridges follow: Cys34–Cys58, Cys42–Cys67, Cys49–Cys71, Cys81–Cys113, and Cys91–Cys123.

This sequence belongs to the pleiotrophin family. As to quaternary structure, homodimer. Interacts with ALK. Interacts with LRP1; promotes neuronal survival. Interacts with LRP2. Interacts with NCAM1. Interacts (via C-terminal) with PTPRZ1 (via chondroitin sulfate chains); this interaction is inhibited by PTN; this interaction promotes neuronal migration. Interacts with NCL; this interaction promotes NCL clustering and lateral movements of this complex into lipid rafts leading to MDK internalization. Interacts with LRP6 and LRP8: this interaction is calcium dependent. Interacts with ITGA4. Interacts with ITGA6. Interacts with ITGB1. Interacts with ITGA4:ITGB1 complex; this interaction mediates MDK-induced osteoblast cells migration through PXN phosphorylation. Interacts with ITGA6:ITGB1 complex; this interaction mediates MDK-induced neurite outgrowth. Interacts with NOTCH2; this interactio mediates a nuclear accumulation of NOTCH2 and therefore activation of NOTCH2 signaling leading to interaction between HES1 and STAT3. Interacts with GPC2 (via heparan sulfate chain); this interaction is inhibited by heparin followed by chondroitin sulfate E; this interaction induces GPC2 clustering through heparan sulfate chain; this interaction induces neuronal cell adhesion and neurite outgrowth. Interacts with SDC3; this interaction induces SDC3 clustering; this interaction induces neuronal cell adhesion and neurite outgrowth. Interacts with SDC1. Interacts with CSPG5; this interaction promotes elongation of oligodendroglial precursor-like cells. Expressed at a low level in arteries, and at higher levels in newly formed neointima. In brain, expressed in the caudate nucleus and the brain stem.

Its subcellular location is the secreted. Its function is as follows. Developmentally regulated, secreted growth factor homologous to pleiotrophin (PTN), which has heparin binding activity. Binds anaplastic lymphoma kinase (ALK) which induces ALK activation and subsequent phosphorylation of the insulin receptor substrate (IRS1), followed by the activation of mitogen-activated protein kinase (MAPK) and PI3-kinase, and the induction of cell proliferation. Involved in neointima formation after arterial injury, possibly by mediating leukocyte recruitment. Also involved in early fetal adrenal gland development. In terms of biological role, secreted protein that functions as a cytokine and growth factor and mediates its signal through cell-surface proteoglycan and non-proteoglycan receptors. Binds cell-surface proteoglycan receptors via their chondroitin sulfate (CS) groups. Thereby regulates many processes like inflammatory response, cell proliferation, cell adhesion, cell growth, cell survival, tissue regeneration, cell differentiation and cell migration. Participates in inflammatory processes by exerting two different activities. Firstly, mediates neutrophils and macrophages recruitment to the sites of inflammation both by direct action by cooperating namely with ITGB2 via LRP1 and by inducing chemokine expression. This inflammation can be accompanied by epithelial cell survival and smooth muscle cell migration after renal and vessel damage, respectively. Secondly, suppresses the development of tolerogenic dendric cells thereby inhibiting the differentiation of regulatory T cells and also promote T cell expansion through NFAT signaling and Th1 cell differentiation. Promotes tissue regeneration after injury or trauma. After heart damage negatively regulates the recruitment of inflammatory cells and mediates cell survival through activation of anti-apoptotic signaling pathways via MAPKs and AKT pathways through the activation of angiogenesis. Also facilitates liver regeneration as well as bone repair by recruiting macrophage at trauma site and by promoting cartilage development by facilitating chondrocyte differentiation. Plays a role in brain by promoting neural precursor cells survival and growth through interaction with heparan sulfate proteoglycans. Binds PTPRZ1 and promotes neuronal migration and embryonic neurons survival. Binds SDC3 or GPC2 and mediates neurite outgrowth and cell adhesion. Binds chondroitin sulfate E and heparin leading to inhibition of neuronal cell adhesion induced by binding with GPC2. Binds CSPG5 and promotes elongation of oligodendroglial precursor-like cells. Also binds ITGA6:ITGB1 complex; this interaction mediates MDK-induced neurite outgrowth. Binds LRP1; promotes neuronal survival. Binds ITGA4:ITGB1 complex; this interaction mediates MDK-induced osteoblast cells migration through PXN phosphorylation. Binds anaplastic lymphoma kinase (ALK) which induces ALK activation and subsequent phosphorylation of the insulin receptor substrate (IRS1), followed by the activation of mitogen-activated protein kinase (MAPK) and PI3-kinase, and the induction of cell proliferation. Promotes epithelial to mesenchymal transition through interaction with NOTCH2. During arteriogenesis, plays a role in vascular endothelial cell proliferation by inducing VEGFA expression and release which in turn induces nitric oxide synthase expression. Moreover activates vasodilation through nitric oxide synthase activation. Negatively regulates bone formation in response to mechanical load by inhibiting Wnt/beta-catenin signaling in osteoblasts. In addition plays a role in hippocampal development, working memory, auditory response, early fetal adrenal gland development and the female reproductive system. The polypeptide is Midkine (Rattus norvegicus (Rat)).